Here is a 578-residue protein sequence, read N- to C-terminus: Protein BONZAI 1 (578 aa).

A lipid anchor (N-myristoyl glycine) is attached at G2. C2 domains follow at residues 26 to 163 (ALGA…TSTL) and 176 to 303 (QPHH…NFSL). The Ca(2+) site is built by D63, D69, D122, and D124. In terms of domain architecture, VWFA spans 341-560 (NFMVAIDFTA…SVVQALLAEL (220 aa)).

Belongs to the copine family. As to quaternary structure, interacts (via VWA domain) with BAP1 and BAP2. Interacts with HSP70-1 and HSP70-2. The cofactor is Ca(2+). In terms of processing, based on mass spectrometry analysis, the N-peptide must be modified and there might be additional modifications other than myristoylation. In terms of tissue distribution, expressed in roots and flowers and, at higher levels, in leaves and stems. Strongly expressed in growing tissues. Not detected in green siliques.

The protein resides in the cell membrane. Its function is as follows. Negative regulator of cell death and defense responses. Negative regulator of several R genes, including SNC1. May have effects in promoting growth and development. May function in membrane trafficking and in fusion of vesicles with plasma membrane at low temperature. Exhibits calcium-dependent phospholipid binding properties. This chain is Protein BONZAI 1 (BON1), found in Arabidopsis thaliana (Mouse-ear cress).